Here is a 393-residue protein sequence, read N- to C-terminus: Dihydrolipoyllysine-residue succinyltransferase component of 2-oxoglutarate dehydrogenase complex (393 aa).

Residues 3–78 (RINILVPDLP…KSNQILGNIV (76 aa)) enclose the Lipoyl-binding domain. Lys44 is subject to N6-lipoyllysine. Catalysis depends on residues His364 and Asp368.

This sequence belongs to the 2-oxoacid dehydrogenase family. Forms a 24-polypeptide structural core with octahedral symmetry. Part of the 2-oxoglutarate dehydrogenase (OGDH) complex composed of E1 (2-oxoglutarate dehydrogenase), E2 (dihydrolipoamide succinyltransferase) and E3 (dihydrolipoamide dehydrogenase); the complex contains multiple copies of the three enzymatic components (E1, E2 and E3). The cofactor is (R)-lipoate.

The enzyme catalyses N(6)-[(R)-dihydrolipoyl]-L-lysyl-[protein] + succinyl-CoA = N(6)-[(R)-S(8)-succinyldihydrolipoyl]-L-lysyl-[protein] + CoA. The protein operates within amino-acid degradation; L-lysine degradation via saccharopine pathway; glutaryl-CoA from L-lysine: step 6/6. Functionally, E2 component of the 2-oxoglutarate dehydrogenase (OGDH) complex which catalyzes the second step in the conversion of 2-oxoglutarate to succinyl-CoA and CO(2). The sequence is that of Dihydrolipoyllysine-residue succinyltransferase component of 2-oxoglutarate dehydrogenase complex (sucB) from Buchnera aphidicola subsp. Schizaphis graminum (strain Sg).